Consider the following 352-residue polypeptide: Pyrimidine monooxygenase RutA (352 aa).

Residues 49-50 (IK), asparagine 115, glutamate 124, 140-141 (RY), and serine 189 contribute to the FMN site.

Belongs to the NtaA/SnaA/DszA monooxygenase family. RutA subfamily.

It carries out the reaction uracil + FMNH2 + NADH + O2 = (Z)-3-ureidoacrylate + FMN + NAD(+) + H2O + H(+). The enzyme catalyses thymine + FMNH2 + NADH + O2 = (Z)-2-methylureidoacrylate + FMN + NAD(+) + H2O + H(+). In terms of biological role, catalyzes the pyrimidine ring opening between N-3 and C-4 by an unusual flavin hydroperoxide-catalyzed mechanism, adding oxygen atoms in the process to yield ureidoacrylate peracid, that immediately reacts with FMN forming ureidoacrylate and FMN-N(5)-oxide. The FMN-N(5)-oxide reacts spontaneously with NADH to produce FMN. Requires the flavin reductase RutF to regenerate FMN in vivo. The chain is Pyrimidine monooxygenase RutA from Caulobacter segnis (strain ATCC 21756 / DSM 7131 / JCM 7823 / NBRC 15250 / LMG 17158 / TK0059) (Mycoplana segnis).